The chain runs to 524 residues: Ribonuclease Y (524 aa).

The helical transmembrane segment at 3–23 threads the bilayer; that stretch reads IVINLFLLVPASIVFFAAGFF. The interval 96–127 is disordered; that stretch reads QQREGQLKKQAQDNRDMERRLQDQRKENEQVQ. The span at 100 to 124 shows a compositional bias: basic and acidic residues; the sequence is GQLKKQAQDNRDMERRLQDQRKENE. One can recognise a KH domain in the interval 214-280; the sequence is ALSVVHIQTD…KLTLQKLLSE (67 aa). The 93-residue stretch at 340 to 432 folds into the HD domain; that stretch reads LLQHSREVAM…VDAANVISLS (93 aa).

This sequence belongs to the RNase Y family.

The protein localises to the cell membrane. Endoribonuclease that initiates mRNA decay. The protein is Ribonuclease Y of Chlorobium phaeovibrioides (strain DSM 265 / 1930) (Prosthecochloris vibrioformis (strain DSM 265)).